A 678-amino-acid chain; its full sequence is Mitogen-activated protein kinase kinase kinase 7 (678 aa).

The region spanning 19-271 (ITLREKVGHG…YIVGVMHEIV (253 aa)) is the Protein kinase domain. ATP is bound by residues 25–33 (VGHGSYGVV) and Lys-46. Asp-140 functions as the Proton acceptor in the catalytic mechanism. Disordered regions lie at residues 296-322 (DGTVAAQPDSLSSQEGELSPSSTQLTP), 339-365 (TTSSMTENTSSTSSDITPTNSGQLDNN), 431-455 (DLSPSESSSSSTNAKSDGRERLTVT), and 616-647 (QLAAGHHPQPHPHPHPNQLQHPHSHPPMHFLQ). Low complexity-rich tracts occupy residues 313–322 (LSPSSTQLTP) and 339–352 (TTSSMTENTSSTSS). Polar residues predominate over residues 353–364 (DITPTNSGQLDN).

This sequence belongs to the protein kinase superfamily. STE Ser/Thr protein kinase family. MAP kinase kinase kinase subfamily. Mg(2+) is required as a cofactor.

The enzyme catalyses L-seryl-[protein] + ATP = O-phospho-L-seryl-[protein] + ADP + H(+). It carries out the reaction L-threonyl-[protein] + ATP = O-phospho-L-threonyl-[protein] + ADP + H(+). Component of a protein kinase signal transduction cascade. Mediator of TGF-beta signal transduction. Responsible for activation of the JNK MAPK pathway (basket, bsk and hemipterous, hep) in response to LPS. Component of the NF-kappa-B pathway; relish-mediated JNK inhibition involves proteasomal degradation of Tak1; certain targets of Relish that are induced during immune responses may facilitate destruction of Tak1 and switch off the JNK cascade. Participates in diverse roles such as control of cell shape and regulation of apoptosis. This Drosophila melanogaster (Fruit fly) protein is Mitogen-activated protein kinase kinase kinase 7 (Tak1).